The sequence spans 489 residues: L-arabinose isomerase (489 aa).

Residues glutamate 300, glutamate 325, histidine 342, and histidine 441 each coordinate Mn(2+).

This sequence belongs to the arabinose isomerase family. Mn(2+) serves as cofactor.

It carries out the reaction beta-L-arabinopyranose = L-ribulose. It functions in the pathway carbohydrate degradation; L-arabinose degradation via L-ribulose; D-xylulose 5-phosphate from L-arabinose (bacterial route): step 1/3. Its function is as follows. Catalyzes the conversion of L-arabinose to L-ribulose. The sequence is that of L-arabinose isomerase from Clostridium beijerinckii (strain ATCC 51743 / NCIMB 8052) (Clostridium acetobutylicum).